The primary structure comprises 167 residues: Protein DLS1 (167 aa).

Position 17 is a phosphoserine (serine 17).

As to quaternary structure, component of the ISW2 complex, which at least consists of ISW2, ITC1, DLS1 and DPB4.

It localises to the nucleus. In terms of biological role, functions as a component of the ISW2 complex, which acts in remodeling the chromatin by catalyzing an ATP-dependent alteration in the structure of nucleosomal DNA. The ISW2 complex is involved in coordinating transcriptional repression and in inheritance of telomeric silencing. It is involved in repression of MAT a-specific genes, INO1, and early meiotic genes during mitotic growth dependent upon transcription factor UME6 and in a parallel pathway to the RPD3-SIN3 histone deacetylase complex. DLS1 is partially required for the ISW2 complex chromatin remodeling activity and is not required for its interaction with chromatin. This Saccharomyces cerevisiae (strain ATCC 204508 / S288c) (Baker's yeast) protein is Protein DLS1 (DLS1).